Reading from the N-terminus, the 627-residue chain is Membrane protein insertase YidC (627 aa).

Residues 8-28 form a helical membrane-spanning segment; the sequence is LFLALILSMGIWMGVNYFFFP. Residues 33-57 are compositionally biased toward polar residues; it reads KKNTETKQTQSDKTSENTKQQITSG. The interval 33–68 is disordered; that stretch reads KKNTETKQTQSDKTSENTKQQITSGKTKESNSADPV. The span at 58-68 shows a compositional bias: basic and acidic residues; that stretch reads KTKESNSADPV. The next 4 membrane-spanning stretches (helical) occupy residues 417–437, 488–508, 536–556, and 575–595; these read FTIP…KLVF, VGGC…YTAF, AIPY…LMVG, and MLMY…PSGV.

It belongs to the OXA1/ALB3/YidC family. Type 1 subfamily. In terms of assembly, interacts with the Sec translocase complex via SecD. Specifically interacts with transmembrane segments of nascent integral membrane proteins during membrane integration.

Its subcellular location is the cell inner membrane. In terms of biological role, required for the insertion and/or proper folding and/or complex formation of integral membrane proteins into the membrane. Involved in integration of membrane proteins that insert both dependently and independently of the Sec translocase complex, as well as at least some lipoproteins. Aids folding of multispanning membrane proteins. The sequence is that of Membrane protein insertase YidC from Leptospira interrogans serogroup Icterohaemorrhagiae serovar copenhageni (strain Fiocruz L1-130).